We begin with the raw amino-acid sequence, 487 residues long: GTPase Der (487 aa).

2 EngA-type G domains span residues 2 to 164 (KTIA…SLAK) and 203 to 374 (IAVG…QRFA). Residues 8–15 (GKPNVGKS), 55–59 (DTGGI), 116–119 (NKVD), 209–216 (GRVNVGKS), 256–260 (DTAGI), and 320–323 (NKWD) contribute to the GTP site. Residues 375–459 (YRIPTSALND…PILLSVKGKN (85 aa)) enclose the KH-like domain. Positions 459–480 (NAKDEENTSAKKESPSKVSHRE) are enriched in basic and acidic residues. The interval 459–487 (NAKDEENTSAKKESPSKVSHRESKNRRFV) is disordered.

It belongs to the TRAFAC class TrmE-Era-EngA-EngB-Septin-like GTPase superfamily. EngA (Der) GTPase family. Associates with the 50S ribosomal subunit.

Functionally, GTPase that plays an essential role in the late steps of ribosome biogenesis. The polypeptide is GTPase Der (Helicobacter hepaticus (strain ATCC 51449 / 3B1)).